We begin with the raw amino-acid sequence, 557 residues long: Hemolysin transporter protein ShlB (557 aa).

The signal sequence occupies residues 1–18; the sequence is MIKKITALTLLVSTALSA. Residues 79 to 152 enclose the POTRA domain; the sequence is LPIAGVYLQG…GELGLSVTEG (74 aa).

Belongs to the TPS (TC 1.B.20) family.

Its subcellular location is the cell outer membrane. Its function is as follows. Interacts with the cell-bound hemolysin. Necessary for the extracellular secretion and activation of hemolysin. Functionally, member of a two partner secretion pathway (TPS) in which it mediates the secretion of hemolysin. In Serratia marcescens, this protein is Hemolysin transporter protein ShlB (shlB).